Consider the following 78-residue polypeptide: Small ribosomal subunit protein uS17 (78 aa).

This sequence belongs to the universal ribosomal protein uS17 family. As to quaternary structure, part of the 30S ribosomal subunit.

Functionally, one of the primary rRNA binding proteins, it binds specifically to the 5'-end of 16S ribosomal RNA. This chain is Small ribosomal subunit protein uS17, found in Sinorhizobium fredii (strain NBRC 101917 / NGR234).